Reading from the N-terminus, the 418-residue chain is Phosphoglycerate kinase (418 aa).

Substrate is bound by residues 18 to 20 (DFN), R34, 57 to 60 (HLGR), R115, and R171. ATP-binding positions include K224, G315, E346, and 375–378 (GGDS).

It belongs to the phosphoglycerate kinase family. As to quaternary structure, monomer.

The protein localises to the cytoplasm. It catalyses the reaction (2R)-3-phosphoglycerate + ATP = (2R)-3-phospho-glyceroyl phosphate + ADP. Its pathway is carbohydrate degradation; glycolysis; pyruvate from D-glyceraldehyde 3-phosphate: step 2/5. The sequence is that of Phosphoglycerate kinase from Porphyromonas gingivalis (strain ATCC BAA-308 / W83).